The chain runs to 90 residues: Small ribosomal subunit protein uS15 (90 aa).

Belongs to the universal ribosomal protein uS15 family. Part of the 30S ribosomal subunit. Forms a bridge to the 50S subunit in the 70S ribosome, contacting the 23S rRNA.

Its function is as follows. One of the primary rRNA binding proteins, it binds directly to 16S rRNA where it helps nucleate assembly of the platform of the 30S subunit by binding and bridging several RNA helices of the 16S rRNA. Forms an intersubunit bridge (bridge B4) with the 23S rRNA of the 50S subunit in the ribosome. In Paraburkholderia xenovorans (strain LB400), this protein is Small ribosomal subunit protein uS15.